A 264-amino-acid polypeptide reads, in one-letter code: uncharacterized protein (264 aa).

6 residues coordinate a divalent metal cation: histidine 7, histidine 9, glutamate 102, histidine 138, histidine 163, and aspartate 213.

The protein belongs to the metallo-dependent hydrolases superfamily. TatD-type hydrolase family. Requires a divalent metal cation as cofactor.

This is an uncharacterized protein from Buchnera aphidicola subsp. Acyrthosiphon pisum (strain APS) (Acyrthosiphon pisum symbiotic bacterium).